We begin with the raw amino-acid sequence, 288 residues long: Serine/threonine-protein phosphatase PGAM5, mitochondrial (288 aa).

The Mitochondrial matrix portion of the chain corresponds to 1–6; the sequence is MAFRQA. A helical membrane pass occupies residues 7 to 29; the sequence is LQLAACGLAGGSAAVLFSAVAVG. The Mitochondrial intermembrane segment spans residues 30–288; it reads KPRAGGDADT…FMPPDKITRS (259 aa). Residues 76–81 form an interaction with KEAP1 region; sequence NVEFGE. Ser86 is subject to Phosphoserine. N6-acetyllysine occurs at positions 115, 143, and 190.

It belongs to the phosphoglycerate mutase family. BPG-dependent PGAM subfamily. In terms of assembly, dimer. Forms a ternary complex with NFE2L2 and KEAP1. Interacts with BCL2L1 and MAP3K5. Upon TNF-induced necrosis, forms in complex with RIPK1, RIPK3 and MLKL; the formation of this complex leads to PGAM5 phosphorylation. Isoform 2, but not isoform 1, interacts with DNM1L; this interaction leads to DNM1L dephosphorylation and activation and eventually to mitochondria fragmentation. In terms of processing, phosphorylated by the RIPK1/RIPK3 complex under necrotic conditions. This phosphorylation increases PGAM5 phosphatase activity. Post-translationally, proteolytically cleaved by PARL in response to loss of mitochondrial membrane potential.

It is found in the mitochondrion outer membrane. The protein localises to the mitochondrion inner membrane. It carries out the reaction O-phospho-L-seryl-[protein] + H2O = L-seryl-[protein] + phosphate. The catalysed reaction is O-phospho-L-threonyl-[protein] + H2O = L-threonyl-[protein] + phosphate. Functionally, mitochondrial serine/threonine phosphatase that dephosphorylates various substrates and thus plays a role in different biological processes including cellular senescence or mitophagy. Modulates cellular senescence by regulating mitochondrial dynamics. Mechanistically, participates in mitochondrial fission through dephosphorylating DNM1L/DRP1. Additionally, dephosphorylates MFN2 in a stress-sensitive manner and consequently protects it from ubiquitination and degradation to promote mitochondrial network formation. Regulates mitophagy independent of PARKIN by interacting with and dephosphorylating FUNDC1, which interacts with LC3. Regulates anti-oxidative response by forming a tertiary complex with KEAP1 and NRF2. Regulates necroptosis by acting as a RIPK3 target and recruiting the RIPK1-RIPK3-MLKL necrosis 'attack' complex to mitochondria. The sequence is that of Serine/threonine-protein phosphatase PGAM5, mitochondrial (Pgam5) from Rattus norvegicus (Rat).